A 516-amino-acid polypeptide reads, in one-letter code: Effector protein hopAB1 (516 aa).

2 disordered regions span residues 1–93 (MSGI…AQPA) and 175–259 (RALA…DEAL). The segment covering 16 to 30 (WRADDEPVTERERDS) has biased composition (basic and acidic residues). A compositionally biased stretch (polar residues) spans 31-41 (SSGANLTNSPQ). Pro residues predominate over residues 81–90 (PVEPRQPPEA). Low complexity-rich tracts occupy residues 183–196 (PAPSRPVASSSRSS) and 212–224 (QTSSSSQATSSTS).

The protein belongs to the HopAB family.

The protein localises to the secreted. In terms of biological role, effector protein that plays different roles depending on the species and plant cultivars that interact with the pathogen. Acts as a virulence determinant by enhancing the development of disease symptoms and bacterial growth. Acts as an avirulence factor by eliciting hypersensitive response (HR) and plant resistance. In Pseudomonas syringae pv. syringae (strain B728a), this protein is Effector protein hopAB1 (hopAB1).